The sequence spans 274 residues: Copper chaperone for superoxide dismutase (274 aa).

The 64-residue stretch at methionine 11–valine 74 folds into the HMA domain. Cu cation is bound by residues cysteine 22 and cysteine 25. Lysine 76 participates in a covalent cross-link: Glycyl lysine isopeptide (Lys-Gly) (interchain with G-Cter in ubiquitin). The interval alanine 88–alanine 234 is superoxide dismutase-like. Cysteine 141 and cysteine 227 are oxidised to a cystine. Zn(2+) contacts are provided by histidine 147, histidine 155, histidine 164, and aspartate 167. Residues lysine 189, lysine 216, and lysine 241 each participate in a glycyl lysine isopeptide (Lys-Gly) (interchain with G-Cter in ubiquitin) cross-link. Positions 244 and 246 each coordinate Cu cation. Serine 267 carries the post-translational modification Phosphoserine.

It in the C-terminal section; belongs to the Cu-Zn superoxide dismutase family. As to quaternary structure, homodimer, and heterodimer with SOD1. Interacts with COMMD1. Interacts with XIAP/BIRC4. Interacts with SLC31A1(via C-terminal domain); this interaction is Cu(1+)-mediated. The heterodimer CCS:SOD1 interacts with SLC31A1; this heterotrimer is Cu(1+)-mediated and its maintenance is regulated through SOD1 activation. Requires Cu(2+) as cofactor. The cofactor is Zn(2+). Ubiquitinion by XIAP/BIRC4 leads to enhancement of its chaperone activity toward its physiologic target, SOD1, rather than proteasomal degradation. XIAP/BIRC4 preferentially ubiquitinates at Lys-241.

Its subcellular location is the cytoplasm. Delivers copper to copper zinc superoxide dismutase (SOD1). In Rattus norvegicus (Rat), this protein is Copper chaperone for superoxide dismutase.